A 240-amino-acid chain; its full sequence is 1-(5-phosphoribosyl)-5-[(5-phosphoribosylamino)methylideneamino] imidazole-4-carboxamide isomerase (240 aa).

The active-site Proton acceptor is the Asp-9. Asp-131 functions as the Proton donor in the catalytic mechanism.

It belongs to the HisA/HisF family.

The protein resides in the cytoplasm. The enzyme catalyses 1-(5-phospho-beta-D-ribosyl)-5-[(5-phospho-beta-D-ribosylamino)methylideneamino]imidazole-4-carboxamide = 5-[(5-phospho-1-deoxy-D-ribulos-1-ylimino)methylamino]-1-(5-phospho-beta-D-ribosyl)imidazole-4-carboxamide. Its pathway is amino-acid biosynthesis; L-histidine biosynthesis; L-histidine from 5-phospho-alpha-D-ribose 1-diphosphate: step 4/9. The polypeptide is 1-(5-phosphoribosyl)-5-[(5-phosphoribosylamino)methylideneamino] imidazole-4-carboxamide isomerase (Azobacteroides pseudotrichonymphae genomovar. CFP2).